The following is a 366-amino-acid chain: 3-isopropylmalate dehydrogenase (366 aa).

77–90 contacts NAD(+); sequence GPKWDDNPPHLRPE. Positions 97, 107, 135, and 223 each coordinate substrate. Positions 223, 246, and 250 each coordinate Mg(2+). Residue 280 to 292 coordinates NAD(+); that stretch reads GSAPDIAGMNKAN.

It belongs to the isocitrate and isopropylmalate dehydrogenases family. LeuB type 1 subfamily. As to quaternary structure, homodimer. The cofactor is Mg(2+). Mn(2+) is required as a cofactor.

The protein localises to the cytoplasm. It carries out the reaction (2R,3S)-3-isopropylmalate + NAD(+) = 4-methyl-2-oxopentanoate + CO2 + NADH. It functions in the pathway amino-acid biosynthesis; L-leucine biosynthesis; L-leucine from 3-methyl-2-oxobutanoate: step 3/4. Functionally, catalyzes the oxidation of 3-carboxy-2-hydroxy-4-methylpentanoate (3-isopropylmalate) to 3-carboxy-4-methyl-2-oxopentanoate. The product decarboxylates to 4-methyl-2 oxopentanoate. This chain is 3-isopropylmalate dehydrogenase (leuB), found in Bacillus caldotenax.